The primary structure comprises 946 residues: Inhibin beta chain (946 aa).

2 disordered regions span residues 115 to 142 (VADRSQASSRTVHVSVPTTPNETPSSTS) and 174 to 194 (KSRNRKRQRRRRRRRNHRRRR). Residues 128-142 (VSVPTTPNETPSSTS) are compositionally biased toward low complexity. N-linked (GlcNAc...) asparagine glycosylation is found at Asn-208, Asn-217, Asn-271, and Asn-389. Residues 436-462 (SPGSHLFNGRGGRTDQRSERDPSHHKY) form a disordered region. Residues 447 to 459 (GRTDQRSERDPSH) are compositionally biased toward basic and acidic residues. 7 N-linked (GlcNAc...) asparagine glycosylation sites follow: Asn-471, Asn-484, Asn-542, Asn-561, Asn-566, Asn-732, and Asn-804. 4 cysteine pairs are disulfide-bonded: Cys-837–Cys-846, Cys-845–Cys-912, Cys-874–Cys-943, and Cys-878–Cys-945.

Belongs to the TGF-beta family. In terms of assembly, homodimer or heterodimer; disulfide-linked. In terms of processing, cleaved in vitro by metalloproteases tok and tld to produce a 30 kDa product. Widely expressed in larval brains.

It localises to the secreted. Controls several aspects of neuronal morphogenesis; essential for optic lobe development, EcR-B1 expression in larval brains, mushroom body remodeling, dorsal neuron morphogenesis and motoneuron axon guidance. Ligands Actbeta and daw act redundantly through the Activin receptor Babo and its transcriptional mediator Smad2 (Smox), to regulate neuroblast numbers and proliferation rates in the developing larval brain. The polypeptide is Inhibin beta chain (Actbeta) (Drosophila melanogaster (Fruit fly)).